We begin with the raw amino-acid sequence, 187 residues long: Large ribosomal subunit protein uL5 (187 aa).

This sequence belongs to the universal ribosomal protein uL5 family. In terms of assembly, part of the 50S ribosomal subunit; part of the 5S rRNA/L5/L18/L25 subcomplex. Contacts the 5S rRNA and the P site tRNA. Forms a bridge to the 30S subunit in the 70S ribosome.

Functionally, this is one of the proteins that bind and probably mediate the attachment of the 5S RNA into the large ribosomal subunit, where it forms part of the central protuberance. In the 70S ribosome it contacts protein S13 of the 30S subunit (bridge B1b), connecting the 2 subunits; this bridge is implicated in subunit movement. Contacts the P site tRNA; the 5S rRNA and some of its associated proteins might help stabilize positioning of ribosome-bound tRNAs. This Nocardia farcinica (strain IFM 10152) protein is Large ribosomal subunit protein uL5.